Here is a 716-residue protein sequence, read N- to C-terminus: DNA ligase (716 aa).

NAD(+) contacts are provided by residues 50–54, 99–100, and Glu132; these read DAEYD and SL. Residue Lys134 is the N6-AMP-lysine intermediate of the active site. NAD(+)-binding residues include Arg155, Glu192, Lys308, and Lys332. Zn(2+) is bound by residues Cys437, Cys439, Cys461, and Cys467. One can recognise a BRCT domain in the interval 638–716; that stretch reads KSNSAVAGKT…EDEWLKLIGE (79 aa).

The protein belongs to the NAD-dependent DNA ligase family. LigA subfamily. It depends on Mg(2+) as a cofactor. Mn(2+) is required as a cofactor.

The catalysed reaction is NAD(+) + (deoxyribonucleotide)n-3'-hydroxyl + 5'-phospho-(deoxyribonucleotide)m = (deoxyribonucleotide)n+m + AMP + beta-nicotinamide D-nucleotide.. Its function is as follows. DNA ligase that catalyzes the formation of phosphodiester linkages between 5'-phosphoryl and 3'-hydroxyl groups in double-stranded DNA using NAD as a coenzyme and as the energy source for the reaction. It is essential for DNA replication and repair of damaged DNA. The chain is DNA ligase from Bradyrhizobium diazoefficiens (strain JCM 10833 / BCRC 13528 / IAM 13628 / NBRC 14792 / USDA 110).